We begin with the raw amino-acid sequence, 83 residues long: Pigment-dispersing hormone peptides (83 aa).

The signal sequence occupies residues 1 to 24 (MRFIILGVLFIAVASMILSNGVMA). Alanine 80 carries the post-translational modification Alanine amide.

This sequence belongs to the arthropod PDH family. Strongly expressed in eyestalk tissue and cerebral ganglia (at protein level).

It is found in the secreted. In terms of biological role, the pigment-dispersing hormone causes the migration of the distal retinal pigment into the proximal end of the pigment chromatophore cells and thus decreases the amount of light entering the retinulas. May also function as a neurotransmitter and/or neuromodulator. This chain is Pigment-dispersing hormone peptides, found in Eurydice pulchra (Speckled sea louse).